A 424-amino-acid polypeptide reads, in one-letter code: UPF0597 protein Sbal223_1296 (424 aa).

It belongs to the UPF0597 family.

The sequence is that of UPF0597 protein Sbal223_1296 from Shewanella baltica (strain OS223).